The following is a 1470-amino-acid chain: Gag-Pol polyprotein (1470 aa).

Glycine 2 carries the N-myristoyl glycine; by host lipid modification. A Nuclear export signal motif is present at residues 16–22 (FEHIRLR). The short motif at 26-32 (KKKYQIK) is the Nuclear localization signal element. Residues 117 to 144 (AVTPPGGQQKNNTGGTATPGGSQNFPAQ) form a disordered region. The span at 122 to 144 (GGQQKNNTGGTATPGGSQNFPAQ) shows a compositional bias: polar residues. CCHC-type zinc fingers lie at residues 398 to 415 (PKCY…QCPE) and 419 to 436 (IKCL…DCRG). Residues 479–504 (KEAPAAVCRERETNEKSEQKPPSEQS) form a disordered region. The span at 486–504 (CRERETNEKSEQKPPSEQS) shows a compositional bias: basic and acidic residues. The region spanning 531–602 (VKALLDTGAD…TPINIIGRNF (72 aa)) is the Peptidase A2 domain. The For protease activity; shared with dimeric partner role is filled by aspartate 536. Residues 658 to 848 (EGKLSRVGGD…PPFEWMGYKL (191 aa)) enclose the Reverse transcriptase domain. Residues aspartate 724, aspartate 799, and aspartate 800 each coordinate Mg(2+). An RT 'primer grip' region spans residues 841-849 (FEWMGYKLW). The short motif at 1011 to 1027 (WEQWWADYWQVSWIPEW) is the Tryptophan repeat motif element. Residues 1047–1170 (IPGEDVYYVD…IDKLVSKGVR (124 aa)) enclose the RNase H type-1 domain. Mg(2+) contacts are provided by aspartate 1056, glutamate 1091, aspartate 1111, and aspartate 1162. The Integrase-type zinc-finger motif lies at 1176–1217 (GRIEEAQEEHDRYHSNWRNLADTFGLPQIVAKEIVAMCPKCQ). Zn(2+) is bound by residues histidine 1185, histidine 1189, cysteine 1213, and cysteine 1216. The Integrase catalytic domain maps to 1227–1377 (VDASPGVWQM…TAAERLINMI (151 aa)). 2 residues coordinate Mg(2+): aspartate 1237 and aspartate 1289. A DNA-binding region (integrase-type) is located at residues 1396–1443 (FRVYYREGRDPVWKGPARLIWKGEGAVVLKEGEELKVVPRRKAKIIKD). The interval 1451 to 1470 (GDETHLEGAGGSDHQMAGDS) is disordered.

As to quaternary structure, homotrimer. Interacts with gp41 (via C-terminus). Homodimer. The active site consists of two apposed aspartic acid residues. In terms of assembly, heterodimer of p66 RT and p51 RT (RT p66/p51). Heterodimerization of RT is essential for DNA polymerase activity. Despite the sequence identities, p66 RT and p51 RT have distinct folding. As to quaternary structure, homotetramer; may further associate as a homohexadecamer. The cofactor is Mg(2+). In terms of processing, specific enzymatic cleavages by the viral protease yield mature proteins. The protease is released by autocatalytic cleavage. The polyprotein is cleaved during and after budding, this process is termed maturation. Proteolytic cleavage of p66 RT removes the RNase H domain to yield the p51 RT subunit. Post-translationally, capsid protein p24 is phosphorylated.

The protein resides in the virion. The protein localises to the host nucleus. It localises to the host cytoplasm. Its subcellular location is the host cell membrane. The catalysed reaction is Specific for a P1 residue that is hydrophobic, and P1' variable, but often Pro.. It carries out the reaction Endohydrolysis of RNA in RNA/DNA hybrids. Three different cleavage modes: 1. sequence-specific internal cleavage of RNA. Human immunodeficiency virus type 1 and Moloney murine leukemia virus enzymes prefer to cleave the RNA strand one nucleotide away from the RNA-DNA junction. 2. RNA 5'-end directed cleavage 13-19 nucleotides from the RNA end. 3. DNA 3'-end directed cleavage 15-20 nucleotides away from the primer terminus.. The enzyme catalyses 3'-end directed exonucleolytic cleavage of viral RNA-DNA hybrid.. It catalyses the reaction DNA(n) + a 2'-deoxyribonucleoside 5'-triphosphate = DNA(n+1) + diphosphate. The viral protease is inhibited by many synthetic protease inhibitors (PIs), such as amprenavir, atazanavir, indinavir, loprinavir, nelfinavir, ritonavir and saquinavir. RT can be inhibited either by nucleoside RT inhibitors (NRTIs) or by non nucleoside RT inhibitors (NNRTIs). NRTIs act as chain terminators, whereas NNRTIs inhibit DNA polymerization by binding a small hydrophobic pocket near the RT active site and inducing an allosteric change in this region. Classical NRTIs are abacavir, adefovir (PMEA), didanosine (ddI), lamivudine (3TC), stavudine (d4T), tenofovir (PMPA), zalcitabine (ddC), and zidovudine (AZT). Classical NNRTIs are atevirdine (BHAP U-87201E), delavirdine, efavirenz (DMP-266), emivirine (I-EBU), and nevirapine (BI-RG-587). The tritherapies used as a basic effective treatment of AIDS associate two NRTIs and one NNRTI. Use of protease inhibitors in tritherapy regimens permit more ambitious therapeutic strategies. Functionally, gag-Pol polyprotein and Gag polyprotein may regulate their own translation, by the binding genomic RNA in the 5'-UTR. At low concentration, Gag-Pol and Gag would promote translation, whereas at high concentration, the polyproteins encapsidate genomic RNA and then shut off translation. Matrix protein p17 has two main functions: in infected cell, it targets Gag and Gag-pol polyproteins to the plasma membrane via a multipartite membrane-binding signal, that includes its myristointegration complex. The myristoylation signal and the NLS exert conflicting influences its subcellular localization. The key regulation of these motifs might be phosphorylation of a portion of MA molecules on the C-terminal tyrosine at the time of virus maturation, by virion-associated cellular tyrosine kinase. Implicated in the release from host cell mediated by Vpu. Its function is as follows. Capsid protein p24 forms the conical core that encapsulates the genomic RNA-nucleocapsid complex in the virion. The core is constituted by capsid protein hexamer subunits. The core is disassembled soon after virion entry. Interaction with host PPIA/CYPA protects the virus from restriction by host TRIM5-alpha and from an unknown antiviral activity in host cells. This capsid restriction by TRIM5 is one of the factors which restricts SIV to the simian species. In terms of biological role, nucleocapsid protein p7 encapsulates and protects viral dimeric unspliced (genomic) RNA. Binds these RNAs through its zinc fingers. Facilitates rearangement of nucleic acid secondary structure during retrotranscription of genomic RNA. This capability is referred to as nucleic acid chaperone activity. Functionally, the aspartyl protease mediates proteolytic cleavages of Gag and Gag-Pol polyproteins during or shortly after the release of the virion from the plasma membrane. Cleavages take place as an ordered, step-wise cascade to yield mature proteins. This process is called maturation. Displays maximal activity during the budding process just prior to particle release from the cell. Also cleaves Nef and Vif, probably concomitantly with viral structural proteins on maturation of virus particles. Hydrolyzes host EIF4GI and PABP1 in order to shut off the capped cellular mRNA translation. The resulting inhibition of cellular protein synthesis serves to ensure maximal viral gene expression and to evade host immune response. Reverse transcriptase/ribonuclease H (RT) is a multifunctional enzyme that converts the viral dimeric RNA genome into dsDNA in the cytoplasm, shortly after virus entry into the cell. This enzyme displays a DNA polymerase activity that can copy either DNA or RNA templates, and a ribonuclease H (RNase H) activity that cleaves the RNA strand of RNA-DNA heteroduplexes in a partially processive 3' to 5' endonucleasic mode. Conversion of viral genomic RNA into dsDNA requires many steps. A tRNA binds to the primer-binding site (PBS) situated at the 5'-end of the viral RNA. RT uses the 3' end of the tRNA primer to perform a short round of RNA-dependent minus-strand DNA synthesis. The reading proceeds through the U5 region and ends after the repeated (R) region which is present at both ends of viral RNA. The portion of the RNA-DNA heteroduplex is digested by the RNase H, resulting in a ssDNA product attached to the tRNA primer. This ssDNA/tRNA hybridizes with the identical R region situated at the 3' end of viral RNA. This template exchange, known as minus-strand DNA strong stop transfer, can be either intra- or intermolecular. RT uses the 3' end of this newly synthesized short ssDNA to perform the RNA-dependent minus-strand DNA synthesis of the whole template. RNase H digests the RNA template except for two polypurine tracts (PPTs) situated at the 5'-end and near the center of the genome. It is not clear if both polymerase and RNase H activities are simultaneous. RNase H can probably proceed both in a polymerase-dependent (RNA cut into small fragments by the same RT performing DNA synthesis) and a polymerase-independent mode (cleavage of remaining RNA fragments by free RTs). Secondly, RT performs DNA-directed plus-strand DNA synthesis using the PPTs that have not been removed by RNase H as primers. PPTs and tRNA primers are then removed by RNase H. The 3' and 5' ssDNA PBS regions hybridize to form a circular dsDNA intermediate. Strand displacement synthesis by RT to the PBS and PPT ends produces a blunt ended, linear dsDNA copy of the viral genome that includes long terminal repeats (LTRs) at both ends. Its function is as follows. Integrase catalyzes viral DNA integration into the host chromosome, by performing a series of DNA cutting and joining reactions. This enzyme activity takes place after virion entry into a cell and reverse transcription of the RNA genome in dsDNA. The first step in the integration process is 3' processing. This step requires a complex comprising the viral genome, matrix protein, Vpr and integrase. This complex is called the pre-integration complex (PIC). The integrase protein removes 2 nucleotides from each 3' end of the viral DNA, leaving recessed CA OH's at the 3' ends. In the second step, the PIC enters cell nucleus. This process is mediated through integrase and Vpr proteins, and allows the virus to infect a non dividing cell. This ability to enter the nucleus is specific of lentiviruses, other retroviruses cannot and rely on cell division to access cell chromosomes. In the third step, termed strand transfer, the integrase protein joins the previously processed 3' ends to the 5' ends of strands of target cellular DNA at the site of integration. The 5'-ends are produced by integrase-catalyzed staggered cuts, 5 bp apart. A Y-shaped, gapped, recombination intermediate results, with the 5'-ends of the viral DNA strands and the 3' ends of target DNA strands remaining unjoined, flanking a gap of 5 bp. The last step is viral DNA integration into host chromosome. This involves host DNA repair synthesis in which the 5 bp gaps between the unjoined strands are filled in and then ligated. Since this process occurs at both cuts flanking the SIV genome, a 5 bp duplication of host DNA is produced at the ends of SIV integration. Alternatively, Integrase may catalyze the excision of viral DNA just after strand transfer, this is termed disintegration. This chain is Gag-Pol polyprotein (gag-pol), found in Cercopithecidae (Old World monkeys).